Here is a 488-residue protein sequence, read N- to C-terminus: MASLGSAAAGEPATGAEAEPGPPAPPPPPPPPPAPSPSALGPLLPLQREPLYNWQATKASLKERFAFLFNSELLSDVRFVLGKGRGAAAAGGPQRIPAHRFVLAAGSAVFDAMFNGGMATTSAEIELPDVEPAAFLALLRFLYSDEVQIGPETVMTTLYTAKKYAVPALEAHCVEFLTKHLRADNAFMLLTQARLFDEPQLASLCLDTIDKSTVDAISAEGFTDIDIDTLCAVLERDTLSIRESRLFGAIVRWAEAECQRQQLAVTFGNKQKVLGKALSLIRFPLMTIEEFAAGPAQSGILSDREVVNLFLHFTVNPKPRVEYIDRPRCCLRGKECCINRFQQVESRWGYSGTSDRIRFTVNRRISVVGFGLYGSIHGPTDYQVNIQIIEYEKKQTLGQNDTGFSCDGTANTFRVMFKEPIEILPNVCYTACATLKGPDSHYGTKGLKKVVHETPAASKTVFLFFSSPGNNNGTSIEDGQIPEIIFYT.

Residues 1–19 show a composition bias toward low complexity; that stretch reads MASLGSAAAGEPATGAEAE. Residues 1–42 are disordered; that stretch reads MASLGSAAAGEPATGAEAEPGPPAPPPPPPPPPAPSPSALGP. Residues 20-36 are compositionally biased toward pro residues; sequence PGPPAPPPPPPPPPAPS. The 77-residue stretch at 75–151 folds into the BTB domain; that stretch reads SDVRFVLGKG…LYSDEVQIGP (77 aa). Residue arginine 85 is modified to Omega-N-methylarginine. Residues 190 to 290 enclose the BACK domain; sequence LTQARLFDEP…IRFPLMTIEE (101 aa).

As to quaternary structure, interacts (via C-terminus) with TOP1. Interacts with TRIM5 isoform Delta. Interacts with CUL3. In terms of tissue distribution, strongly expressed in heart and skeletal muscle. Weakly expressed in myoblast C2C12 cells, but strongly up-regulated upon their differentiation into myotubes.

The protein localises to the cytoplasm. Its pathway is protein modification; protein ubiquitination. In terms of biological role, probable substrate-specific adapter of an E3 ubiquitin-protein ligase complex which mediates the ubiquitination and subsequent proteasomal degradation of target proteins. Seems to regulate expression levels and/or subnuclear distribution of TOP1, via an unknown mechanism. May play a role in mesenchymal differentiation where it promotes myogenic differentiation and suppresses adipogenesis. This is BTB/POZ domain-containing protein 1 (Btbd1) from Mus musculus (Mouse).